Consider the following 181-residue polypeptide: ADP-ribosylation factor 1 (181 aa).

Residue Gly2 is the site of N-myristoyl glycine attachment. GTP is bound by residues Leu25 to Thr32, Thr48, Gly70, Asn126 to Asp129, and Ala160 to Thr161. A Glycyl lysine isopeptide (Lys-Gly) (interchain with G-Cter in ubiquitin) cross-link involves residue Lys127.

The protein belongs to the small GTPase superfamily. Arf family. Interacts with RUD3. Interacts with VPS13 (via C-terminal part); the interaction is direct.

The protein resides in the golgi apparatus. The enzyme catalyses GTP + H2O = GDP + phosphate + H(+). In terms of biological role, GTP-binding protein involved in Golgi vesicle trafficking. May modulate vesicle budding and uncoating within the Golgi apparatus. May recruit the lipid transfer protein VPS13 to Golgi membranes. Recruits polyadenylate-binding protein PAB1 to COPI vesicles, and this is required for correct localization of the asymmetrically distributed ASH1 mRNA. The sequence is that of ADP-ribosylation factor 1 (ARF1) from Saccharomyces cerevisiae (strain ATCC 204508 / S288c) (Baker's yeast).